The primary structure comprises 300 residues: Meiotically up-regulated gene 165 protein (300 aa).

Disordered regions lie at residues 1 to 38 (MLEKGEHIEYPNTPPLHSPPESHTFSSQTDDSYFHKPS) and 50 to 109 (TNSS…STLE). Residues 21–38 (ESHTFSSQTDDSYFHKPS) show a composition bias toward polar residues. Positions 52–69 (SSVPSASRSPESIASSQS) are enriched in low complexity. A compositionally biased stretch (basic residues) spans 94-103 (TLRKRGRKPK).

The protein localises to the nucleus. Its function is as follows. Has a role in meiosis. The polypeptide is Meiotically up-regulated gene 165 protein (mug165) (Schizosaccharomyces pombe (strain 972 / ATCC 24843) (Fission yeast)).